The primary structure comprises 422 residues: Serpin A11 (422 aa).

The signal sequence occupies residues 1–24; that stretch reads MGPVWLWLLIAELLLPVHYQPSSA. Residues 25 to 45 are disordered; sequence HGDKSLGAPQPASHQSLEPAP. Asparagine 106, asparagine 169, asparagine 350, and asparagine 385 each carry an N-linked (GlcNAc...) asparagine glycan.

The protein belongs to the serpin family.

The protein localises to the secreted. In Rattus norvegicus (Rat), this protein is Serpin A11 (Serpina11).